Reading from the N-terminus, the 119-residue chain is Small ribosomal subunit protein bS6 (119 aa).

The interval 99–119 (KKEKKQSRKEEGSENSEKVEE) is disordered.

Belongs to the bacterial ribosomal protein bS6 family.

Functionally, binds together with bS18 to 16S ribosomal RNA. The polypeptide is Small ribosomal subunit protein bS6 (Thermosipho melanesiensis (strain DSM 12029 / CIP 104789 / BI429)).